The chain runs to 109 residues: Ribonuclease P protein component 2 (109 aa).

It belongs to the eukaryotic/archaeal RNase P protein component 2 family. As to quaternary structure, consists of a catalytic RNA component and at least 4-5 protein subunits.

The protein localises to the cytoplasm. It carries out the reaction Endonucleolytic cleavage of RNA, removing 5'-extranucleotides from tRNA precursor.. Part of ribonuclease P, a protein complex that generates mature tRNA molecules by cleaving their 5'-ends. This Archaeoglobus fulgidus (strain ATCC 49558 / DSM 4304 / JCM 9628 / NBRC 100126 / VC-16) protein is Ribonuclease P protein component 2.